The primary structure comprises 471 residues: Nitrosourea synthase (471 aa).

The segment at 177 to 328 is HO-like; it reads MWLVQFAPDF…GRMAREKIIK (152 aa). Fe(2+) is bound by residues E189, E215, H225, E281, H311, D315, H318, H407, H409, and H448. The tract at residues 397-459 is cupin; it reads VEPRGELSNT…ANIESDECVY (63 aa).

As to quaternary structure, homodimer. Fe(2+) is required as a cofactor.

The enzyme catalyses N(omega)-methyl-L-arginine + 2 NADH + 3 O2 + H(+) = N(delta)-hydroxy-N(omega)-methyl-N(omega)-nitroso-L-citrulline + 2 NAD(+) + 3 H2O. It carries out the reaction N(omega)-methyl-L-arginine + NADH + O2 + H(+) = N(delta)-hydroxy-N(omega)-methyl-L-arginine + NAD(+) + H2O. The catalysed reaction is N(delta)-hydroxy-N(omega)-methyl-L-arginine + NADH + O2 = N(delta),N(omega')-dihydroxy-N(omega)-methyl-L-arginine + NAD(+) + H2O. It catalyses the reaction N(delta),N(omega')-dihydroxy-N(omega)-methyl-L-arginine + O2 = N(delta)-hydroxy-N(omega)-methyl-N(omega)-nitroso-L-citrulline + H2O. The enzyme catalyses 2 N(delta)-hydroxy-N(omega)-methyl-N(omega)-nitroso-L-citrulline + AH2 = 2 N(delta)-hydroxy-N(omega)-methyl-L-citrulline + 2 nitric oxide + A. Its pathway is antibiotic biosynthesis. In terms of biological role, involved in the biosynthesis of the glucosamine-nitrosourea antibiotic streptozotocin (SZN). Catalyzes a complex multi-step reaction: the overall reaction is an oxidative rearrangement of the guanidine group of N(omega)-methyl-L-arginine (L-NMA), generating an N-nitrosourea product. SznF first hydroxylates L-NMA to form N(delta)-hydroxy-N(omega)-methyl-L-arginine (L-HMA), which is further hydroxylated to give N(delta)-hydroxy-N(omega)-hydroxy-N(omega)-methyl-L-arginine (L-DHMA). Subsequently, an oxidative rearrangement converts this intermediate to N(delta)-hydroxy-N(omega)-methyl-N(omega)-nitroso-L-citrulline. This product is unstable, and degrades non-enzymically into nitric oxide and the denitrosated product N(delta)-hydroxy-N(omega)-methyl-L-citrulline. In Streptomyces achromogenes subsp. streptozoticus, this protein is Nitrosourea synthase.